We begin with the raw amino-acid sequence, 104 residues long: Large ribosomal subunit protein uL24 (104 aa).

The protein belongs to the universal ribosomal protein uL24 family. In terms of assembly, part of the 50S ribosomal subunit.

Its function is as follows. One of two assembly initiator proteins, it binds directly to the 5'-end of the 23S rRNA, where it nucleates assembly of the 50S subunit. One of the proteins that surrounds the polypeptide exit tunnel on the outside of the subunit. The chain is Large ribosomal subunit protein uL24 from Photobacterium profundum (strain SS9).